The following is a 4690-amino-acid chain: Nonribosomal peptide synthetase sidN (4690 aa).

Residues 238–656 (ARVRENPGRI…LGRLSSDQIK (419 aa)) are adenylation 1. A Carrier 1 domain is found at 779–856 (SSSIPMLQSV…DLDTKAQQAL (78 aa)). Position 816 is an O-(pantetheine 4'-phosphoryl)serine (Ser-816). The segment at 924-1175 (APGGKAFIQH…AFGNTMSDRF (252 aa)) is condensation 1. An adenylation 2 region spans residues 1349–1760 (EFAQKSPNAI…GRKDDLVKIR (412 aa)). Residues 1889–1965 (PAWCIKHRPL…DLINHLSVKR (77 aa)) form the Carrier 2 domain. Ser-1926 is modified (O-(pantetheine 4'-phosphoryl)serine). A condensation 2 region spans residues 2001–2285 (PTTVFQDGML…SERLLESQLV (285 aa)). Residues 2464–2869 (TWAKTHPEWK…GRKDEQVKVR (406 aa)) are adenylation 3. The Carrier 3 domain occupies 3002–3079 (RDLTSIEKQI…ELGRMKNALK (78 aa)). An O-(pantetheine 4'-phosphoryl)serine modification is found at Ser-3040. The condensation 3 stretch occupies residues 3121–3530 (CMPLQEVLVA…QMESLVTSFT (410 aa)). The region spanning 3564 to 3637 (SVLEQQIRDV…KLATHIQTTS (74 aa)) is the Carrier 4 domain. The residue at position 3598 (Ser-3598) is an O-(pantetheine 4'-phosphoryl)serine. Positions 3679–4087 (VYPLTPLQAG…FESIRKHPDE (409 aa)) are condensation 4. One can recognise a Carrier 5 domain in the interval 4119-4195 (SAIDQFLDPL…KLCEVAFAKS (77 aa)). Position 4156 is an O-(pantetheine 4'-phosphoryl)serine (Ser-4156). The tract at residues 4262-4589 (WVFKAENGLD…FNAHLNILWN (328 aa)) is condensation 5.

The protein belongs to the NRP synthetase family.

Its pathway is siderophore biosynthesis. Its function is as follows. Nonribosomal peptide synthetase required for the biosynthetis of epichloenin A, an extracellular siderophore that plays a crucial role in endophyte-grass symbioses. SidN assembles epichloenin A by activating and incorporating three trans-anhydromevalonylhydroxyornithine (trans-AMHO), 1 glutamine and 4 glycine moieties. Trans-AMHO is produced from L-ornithine via 2 steps involving a L-ornithine N(5)-monooxygenase and an AHMO-N(5)-transacylase that have still to be identified. The third adenylation domain (A3) of sidN incorporates the hydroxamate groups of the siderophore which forms an octahedral iron complex. The other component amino acids are assembled by sidN adenylation domains A1 and A2. The protein is Nonribosomal peptide synthetase sidN of Epichloe festucae (strain Fl1).